The chain runs to 309 residues: Protein EXORDIUM-like 1 (309 aa).

The signal sequence occupies residues 1–23 (MASFVMGYFLLFAVAFMCLDART).

This sequence belongs to the EXORDIUM family.

The protein resides in the secreted. Its subcellular location is the extracellular space. It is found in the apoplast. In terms of biological role, may play a role in a brassinosteroid-dependent regulatory pathway that controls growth and development under low carbon and energy availability. The protein is Protein EXORDIUM-like 1 (EXL1) of Arabidopsis thaliana (Mouse-ear cress).